The following is a 150-amino-acid chain: Large ribosomal subunit protein uL13 (150 aa).

This sequence belongs to the universal ribosomal protein uL13 family. As to quaternary structure, part of the 50S ribosomal subunit.

Functionally, this protein is one of the early assembly proteins of the 50S ribosomal subunit, although it is not seen to bind rRNA by itself. It is important during the early stages of 50S assembly. The sequence is that of Large ribosomal subunit protein uL13 from Persephonella marina (strain DSM 14350 / EX-H1).